A 230-amino-acid chain; its full sequence is MEAMAVFSGSNLFATSSLLLTTNSKTRYSQLRTTQNLSAFSSKSHLFSPSSTSSSYPKTFRTRSSTESGIFLPRLITSLEQVDQAYIMVKPDGVQRGLVGEIISRFEKKGFKLTGLKLFQCSKELAEEHYKHLNQKSFFPKLIEYITSGPVVSMAWEGVGVVPSARKLIGATDPLQAEPGTIRGDFAVQTGRNIIHGSDSPENGEREIALWFKEGELCEWTPVQEPWLRE.

The N-terminal 64 residues, 1 to 64 (MEAMAVFSGS…SYPKTFRTRS (64 aa)), are a transit peptide targeting the chloroplast. Residues Lys90, Phe138, Arg166, Thr172, Arg183, and Asn193 each contribute to the ATP site. Catalysis depends on His196, which acts as the Pros-phosphohistidine intermediate.

Belongs to the NDK family. Mg(2+) serves as cofactor.

Its subcellular location is the plastid. It localises to the chloroplast. The enzyme catalyses a 2'-deoxyribonucleoside 5'-diphosphate + ATP = a 2'-deoxyribonucleoside 5'-triphosphate + ADP. It carries out the reaction a ribonucleoside 5'-diphosphate + ATP = a ribonucleoside 5'-triphosphate + ADP. Its function is as follows. Major role in the synthesis of nucleoside triphosphates other than ATP. The ATP gamma phosphate is transferred to the NDP beta phosphate via a ping-pong mechanism, using a phosphorylated active-site intermediate. This is Nucleoside diphosphate kinase 2, chloroplastic (NDPK2) from Pisum sativum (Garden pea).